The following is a 3343-amino-acid chain: Breast cancer type 2 susceptibility protein homolog (3343 aa).

The tract at residues 1–40 (MTVEYKRRPTFWEIFKARCSTADLGPISLNWFEELFSEAP) is interaction with PALB2. Positions 40–60 (PPYNTEHPEESEYKPQGHEPQ) are disordered. Residues 45–56 (EHPEESEYKPQG) show a composition bias toward basic and acidic residues. Phosphoserine is present on Ser-70. Residues 348–381 (IEPRDSEPLDPSVTNQKPLYSQSGDISSEAGQCS) are disordered. Polar residues predominate over residues 359–381 (SVTNQKPLYSQSGDISSEAGQCS). A phosphoserine mark is found at Ser-475 and Ser-736. An interaction with NPM1 region spans residues 622-982 (PDSSIKRSNL…DKWSEFLDPL (361 aa)). BRCA2 repeat units follow at residues 984–1018 (NHKLGGSFRTASNKEIKLSEDNVKKSKMFFKDIEE), 1197–1231 (KEMEFGGFCSALGTKLSVSNEALRKAMKLFSDIEN), 1405–1439 (MKEFNISFQTASGKNIRVSKESLNKSVNILDQETE), 1503–1537 (KEPTLLSFHTASGKKVKIMQESLDKVKNLFDETQY), 1645–1669 (CYTGDSRKTCVGESSLSKGKKWLRE), 1828–1845 (FITTHSQETVRMKEIFTD), 1939–1973 (PSRTYGFFSTASGKAVQVSDASLEKARQVFSEIDG), and 2019–2053 (SSFVFSGFSTAGGKLVTVSESALHKVKGMLEEFDL). An interaction with RAD51 region spans residues 985 to 2050 (HKLGGSFRTA…LHKVKGMLEE (1066 aa)). Disordered stretches follow at residues 2059–2138 (TLQH…VLGT), 2297–2356 (PFCS…SDKS), and 2377–2407 (DSKNVNLEGKNQKSADGVSEDGNDSDFPQFN). Ser-2063 is subject to Phosphoserine. 2 stretches are compositionally biased toward polar residues: residues 2083 to 2094 (PEYSVSSKLQKT) and 2101 to 2125 (SPSNYKESGSSGNTQSLEVSPQLSQ). Residues 2233–2300 (RKRGGMAGVA…EPVTCGPFCS (68 aa)) are interaction with HSF2BP. 2 stretches are compositionally biased toward polar residues: residues 2307–2320 (TQSPHVTSPAQGLQ) and 2332–2342 (GKSSSNPTVSA). Residues 2313 to 2475 (TSPAQGLQSK…SPKQLYMYGV (163 aa)) are interaction with FANCD2. The span at 2344–2356 (RSERTRHSVSDKS) shows a compositional bias: basic and acidic residues. The tract at residues 2411–2762 (MSSLQNARDL…QRVYPLQWVE (352 aa)) is interaction with SEM1. A Nuclear export signal; masked by interaction with SEM1 motif is present at residues 2612-2628 (AAKTLVLCVSDIISLST). A disordered region spans residues 3114–3163 (DSPKWSTPNKDPTREPYPASTCSASDLASGGQLPRSSPTDQQSYRSPLSC). Positions 3147–3163 (PRSSPTDQQSYRSPLSC) are enriched in polar residues. Ser-3222 carries the post-translational modification Phosphoserine; by CDK1 and CDK2. 2 disordered regions span residues 3231-3255 (PPRSCGTKYPTPLKKEGPSSPWSRA) and 3289-3343 (VGGS…PDYS). A Phosphoserine modification is found at Ser-3250. A compositionally biased stretch (polar residues) spans 3295–3310 (VFPSDSTRTEGPSAST). Residues 3318–3334 (SKRESLRDCRDDSDGKL) show a composition bias toward basic and acidic residues.

Monomer and dimer. Interacts with RAD51; regulates RAD51 recruitment and function at sites of DNA repair. Interacts with SEM1, WDR16, USP11, DMC1, ROCK2 and NPM1. Interacts with both nonubiquitinated and monoubiquitinated FANCD2; this complex also includes XRCC3 and phosphorylated FANCG. Part of a BRCA complex containing BRCA1, BRCA2 and PALB2. Component of the homologous recombination repair (HR) complex composed of ERCC5/XPG, BRCA2, PALB2, DSS1 and RAD51. Within the complex, interacts with ERCC5/XPG and PALB2. Interacts directly with PALB2 which may serve as a scaffold for a HR complex containing PALB2, BRCA2, RAD51C, RAD51 and XRCC3. Interacts with BRCA1 only in the presence of PALB2 which serves as the bridging protein. Interacts with POLH; the interaction is direct. Interacts with the TREX-2 complex subunits PCID2 and SEM1. Interacts with HSF2BP and BRME1; the interaction with HSF2BP is direct and allows the formation of a ternary complex. The complex BRME1:HSF2BP:BRCA2 interacts with SPATA22, MEIOB and RAD51. Post-translationally, phosphorylated by ATM upon irradiation-induced DNA damage. Phosphorylation by CHEK1 and CHEK2 regulates interaction with RAD51. Phosphorylation at Ser-3222 by CDK1 and CDK2 is low in S phase when recombination is active, but increases as cells progress towards mitosis; this phosphorylation prevents homologous recombination-dependent repair during S phase and G2 by inhibiting RAD51 binding. In terms of processing, ubiquitinated in the absence of DNA damage; this does not lead to proteasomal degradation. In contrast, ubiquitination in response to DNA damage leads to proteasomal degradation. In terms of tissue distribution, highest expression in testis. Also expressed in spleen, skeletal muscle, thymus, mammary gland, heart, ovary, prostate, liver, lung, kidney and brain.

It is found in the nucleus. The protein localises to the cytoplasm. The protein resides in the cytoskeleton. Its subcellular location is the microtubule organizing center. It localises to the centrosome. In terms of biological role, involved in double-strand break repair and/or homologous recombination. Binds RAD51 and potentiates recombinational DNA repair by promoting assembly of RAD51 onto single-stranded DNA (ssDNA). Acts by targeting RAD51 to ssDNA over double-stranded DNA, enabling RAD51 to displace replication protein-A (RPA) from ssDNA and stabilizing RAD51-ssDNA filaments by blocking ATP hydrolysis. Part of a PALB2-scaffolded HR complex containing RAD51C and which is thought to play a role in DNA repair by HR. May participate in S phase checkpoint activation. Binds selectively to ssDNA, and to ssDNA in tailed duplexes and replication fork structures. May play a role in the extension step after strand invasion at replication-dependent DNA double-strand breaks; together with PALB2 is involved in both POLH localization at collapsed replication forks and DNA polymerization activity. In concert with NPM1, regulates centrosome duplication. Interacts with the TREX-2 complex (transcription and export complex 2) subunits PCID2 and SEM1, and is required to prevent R-loop-associated DNA damage and thus transcription-associated genomic instability, independently of its known role in homologous recombination. This is Breast cancer type 2 susceptibility protein homolog from Rattus norvegicus (Rat).